The sequence spans 66 residues: Large ribosomal subunit protein bL31 (66 aa).

Positions 16, 18, 36, and 39 each coordinate Zn(2+).

The protein belongs to the bacterial ribosomal protein bL31 family. Type A subfamily. Part of the 50S ribosomal subunit. Zn(2+) serves as cofactor.

In terms of biological role, binds the 23S rRNA. This is Large ribosomal subunit protein bL31 from Natranaerobius thermophilus (strain ATCC BAA-1301 / DSM 18059 / JW/NM-WN-LF).